The sequence spans 172 residues: Large ribosomal subunit protein bL17 (172 aa).

The tract at residues 153–172 is disordered; it reads AQAAEPVAAAEPATPATTAG.

It belongs to the bacterial ribosomal protein bL17 family. As to quaternary structure, part of the 50S ribosomal subunit. Contacts protein L32.

In Sorangium cellulosum (strain So ce56) (Polyangium cellulosum (strain So ce56)), this protein is Large ribosomal subunit protein bL17.